The sequence spans 180 residues: Ribulose bisphosphate carboxylase small subunit, chloroplastic 2 (180 aa).

A chloroplast-targeting transit peptide spans 1 to 56 (MASSVISSAAVATRSNVTQASMVAPFTGLKSSATFPVTKKQNLDITSIASNGGRVS).

Belongs to the RuBisCO small chain family. In terms of assembly, heterohexadecamer of 8 large and 8 small subunits. As to quaternary structure, (Microbial infection) Binds to tobamovirus movement protein; this interaction seems required for viral systemic movement.

It localises to the plastid. It is found in the chloroplast. The protein resides in the cell junction. Its subcellular location is the plasmodesma. Functionally, ruBisCO catalyzes two reactions: the carboxylation of D-ribulose 1,5-bisphosphate, the primary event in carbon dioxide fixation, as well as the oxidative fragmentation of the pentose substrate. Both reactions occur simultaneously and in competition at the same active site. Although the small subunit is not catalytic it is essential for maximal activity. Involved in antiviral defenses. The sequence is that of Ribulose bisphosphate carboxylase small subunit, chloroplastic 2 from Solanum lycopersicum (Tomato).